A 973-amino-acid chain; its full sequence is MDLDPHAGVQVGMRVVRGMDWKWGQQDGGEGGVGTVVELGRHGSPSTPDRTVVVQWDQGTRTNYRAGYQGAHDLLLYDNAQIGIRHPNIICDCCKKHGLRGMRWKCRVCFDYDLCTQCYMHNKHDLTHAFERYETSHSRPVTLSPRQGLPRIPLRGIFQGAKVVRGPDWEWGSQDGGEGKTGRVVDIRGWDVETGRSVASVTWADGTTNVYRVGHKGKVDLRCVGEAAGGFYYKEHLPKLGKPAELQRRVSADGQPFQRGDKVKCLLDTDVLRDMQEGHGGWNPRMAEFIGQMGTVHRITDRGDVRVQFNHETRWTFHPGALTKHNSFWVGDVVRVIGDLDTVKRLQAGHGEWTDDMAPALGRVGKVVKVFGDGNLRVAVGGQRWTFSPSCLVAYRPEEDANLDVAERARENKSAASVSVAGSLSVALDKLRTQKSDPEHPGRLVVEAALGNVARALDLLRRHPEQASYHPALVVDTKNQGRTALQVAAYLGQVELVRLLLQARASMDLPDDEGNTVLHYTAMGNQPEATRVLLSAGCAVDARNGTRSTALHVAVQRGFLEVVKILCERGCDVNLPDAHADTPLHSAISAGAGASSIVEVLTEVPGIDVTATNSQGFTLLHHASLKGHVLAVRKILARARQLVDAKKEDGFTALHLAALNNHREVAQVLIREGRCDVNVRNRKLQSPLHLAVQQAHLGLVPLLVDAGCSVNTEDEEGDTALHVALQRHQLLPLVADRAGGDPGPLQLLSRLQASGLPGCTELTVGAAVACFLALEGADVSYANHRGRSPLDLATEGRVLKALQGCAQRFRERQAGGGGGVPPGPRHVLSTPNTVTNLHVSGTAGPEAAECLVCSELALLILFSPCQHRTVCEECARRMKKCIRCQVVISKKLRPDGSEVVNAIQVPGPPRQLVEELQSRYRQMEERITCPICIDSHIRLVFQCGHGACAPCGAALNACPICRQPIRDRIQIFV.

Positions 1–80 (MDLDPHAGVQ…AHDLLLYDNA (80 aa)) constitute an MIB/HERC2 1 domain. The ZZ-type zinc finger occupies 86–138 (HPNIICDCCKKHGLRGMRWKCRVCFDYDLCTQCYMHNKHDLTHAFERYETSHS). Cys91, Cys94, Cys106, Cys109, Cys115, Cys118, His124, and His128 together coordinate Zn(2+). The MIB/HERC2 2 domain occupies 149-227 (LPRIPLRGIF…KVDLRCVGEA (79 aa)). A Phosphoserine modification is found at Ser251. ANK repeat units follow at residues 480–509 (QGRT…SMDL), 513–542 (EGNT…AVDA), 546–575 (TRST…DVNL), 579–611 (HADT…DVTA), 615–644 (QGFT…QLVD), 649–679 (DGFT…DVNV), 683–712 (KLQS…SVNT), 716–744 (EGDT…DPGP), and 785–814 (RGRS…ERQA). RING-type zinc fingers lie at residues 850 to 885 (CLVC…IRCQ) and 929 to 962 (CPIC…PICR).

Interacts with actin monomer. Ubiquitinated. Possibly via autoubiquitination. Highly expressed in brain, heart, liver and kidney.

The protein localises to the cytoplasm. The protein resides in the endosome. It catalyses the reaction S-ubiquitinyl-[E2 ubiquitin-conjugating enzyme]-L-cysteine + [acceptor protein]-L-lysine = [E2 ubiquitin-conjugating enzyme]-L-cysteine + N(6)-ubiquitinyl-[acceptor protein]-L-lysine.. The protein operates within protein modification; protein ubiquitination. E3 ubiquitin-protein ligase that mediates ubiquitination of Delta receptors, which act as ligands of Notch proteins. Positively regulates the Delta-mediated Notch signaling by ubiquitinating the intracellular domain of Delta, leading to endocytosis of Delta receptors. This is E3 ubiquitin-protein ligase MIB2 (Mib2) from Mus musculus (Mouse).